The following is a 703-amino-acid chain: Collagen alpha-2(VIII) chain (703 aa).

An N-terminal signal peptide occupies residues 1–28 (MLGTLTPLSSLLLLLLVLVLGCGPRASS). A nonhelical region (NC2) region spans residues 29–76 (GGGAGGAAGYAPVKYIQPMQKGPVGPPFREGKGQYLEMPLPLLPMDLK). Residues 70–544 (LLPMDLKGEP…AFDETGIAGL (475 aa)) are disordered. Positions 77–536 (GEPGPPGKPG…PGPPGAPGAF (460 aa)) are triple-helical region. The segment covering 79–97 (PGPPGKPGPRGPPGPPGFP) has biased composition (pro residues). Over residues 166 to 192 (PSGITIPGKPGAQGVPGPPGFQGEPGP) the composition is skewed to low complexity. Residues 206–224 (GDNGVGQPGLPGAPGQGGA) show a composition bias toward gly residues. 2 stretches are compositionally biased toward low complexity: residues 265–275 (EPGAVGPKGPP) and 285–297 (AAGL…PSGA). The segment covering 433-442 (GRPGGPGVAG) has biased composition (gly residues). Low complexity-rich tracts occupy residues 444-462 (LGQK…RGPS) and 476-486 (PQGLPGLKGEP). A compositionally biased stretch (pro residues) spans 506 to 532 (TGPPGVPGSPGITGPPGPPGPPGPPGA). Residues 537 to 703 (DETGIAGLHL…SFSGFLLCPT (167 aa)) form a nonhelical region (NC1) region. The 134-residue stretch at 570-703 (SAHATPAFTA…SFSGFLLCPT (134 aa)) folds into the C1q domain.

Homotrimers, or heterotrimers in association with alpha 2(VIII) type collagens. Four homotrimers can form a tetrahedron stabilized by central interacting C-terminal NC1 trimers. Proteolytically cleaved by neutrophil elastase, in vitro. In terms of processing, prolines at the third position of the tripeptide repeating unit (G-X-Y) are hydroxylated in some or all of the chains. As to expression, expressed primarily in the subendothelium of large blood vessels. Also expressed in arterioles and venules in muscle, heart, kidney, spleen, umbilical cord, liver and lung and is also found in connective tissue layers around hair follicles, around nerve bundles in muscle, in the dura of the optic nerve, in cornea and sclera, and in the perichondrium of cartilaginous tissues. In the kidney, expressed in mesangial cells, glomerular endothelial cells, and tubular epithelial cells. Also expressed in mast cells, and in astrocytes during the repair process. Expressed in Descemet's membrane.

It is found in the secreted. Its subcellular location is the extracellular space. The protein resides in the extracellular matrix. It localises to the basement membrane. Macromolecular component of the subendothelium. Major component of the Descemet's membrane (basement membrane) of corneal endothelial cells. Also a component of the endothelia of blood vessels. Necessary for migration and proliferation of vascular smooth muscle cells and thus, has a potential role in the maintenance of vessel wall integrity and structure, in particular in atherogenesis. The chain is Collagen alpha-2(VIII) chain (COL8A2) from Homo sapiens (Human).